The primary structure comprises 200 residues: Small ribosomal subunit protein uS4 (200 aa).

The interval 22–43 is disordered; the sequence is TGKELQKRPYPPGQHGPSQRRK. One can recognise an S4 RNA-binding domain in the interval 92–152; that stretch reads SRLDNLVYRL…EKSRNLQVIK (61 aa).

It belongs to the universal ribosomal protein uS4 family. In terms of assembly, part of the 30S ribosomal subunit. Contacts protein S5. The interaction surface between S4 and S5 is involved in control of translational fidelity.

In terms of biological role, one of the primary rRNA binding proteins, it binds directly to 16S rRNA where it nucleates assembly of the body of the 30S subunit. Functionally, with S5 and S12 plays an important role in translational accuracy. This chain is Small ribosomal subunit protein uS4, found in Geobacillus sp. (strain WCH70).